The chain runs to 194 residues: Peptidyl-tRNA hydrolase (194 aa).

Tyrosine 17 lines the tRNA pocket. Catalysis depends on histidine 22, which acts as the Proton acceptor. Residues tyrosine 68, asparagine 70, and asparagine 116 each coordinate tRNA.

The protein belongs to the PTH family. As to quaternary structure, monomer.

Its subcellular location is the cytoplasm. The enzyme catalyses an N-acyl-L-alpha-aminoacyl-tRNA + H2O = an N-acyl-L-amino acid + a tRNA + H(+). Hydrolyzes ribosome-free peptidyl-tRNAs (with 1 or more amino acids incorporated), which drop off the ribosome during protein synthesis, or as a result of ribosome stalling. Its function is as follows. Catalyzes the release of premature peptidyl moieties from peptidyl-tRNA molecules trapped in stalled 50S ribosomal subunits, and thus maintains levels of free tRNAs and 50S ribosomes. The protein is Peptidyl-tRNA hydrolase of Pseudomonas fluorescens (strain SBW25).